Here is a 721-residue protein sequence, read N- to C-terminus: Polyribonucleotide nucleotidyltransferase (721 aa).

2 residues coordinate Mg(2+): Asp495 and Asp501. The KH domain occupies 562–621 (PRLLSFRIDPELIGTVIGPGGRTIKGITERTNTKIDIEDGGIVTIASHDGAAAEEAQKII). The S1 motif domain maps to 631–699 (GEIFSGVVTR…SRGRINLTLR (69 aa)). The segment at 701 to 721 (VGQNNGMSYPEPTPTPVAPLN) is disordered. Over residues 711–721 (EPTPTPVAPLN) the composition is skewed to pro residues.

This sequence belongs to the polyribonucleotide nucleotidyltransferase family. It depends on Mg(2+) as a cofactor.

The protein localises to the cytoplasm. It carries out the reaction RNA(n+1) + phosphate = RNA(n) + a ribonucleoside 5'-diphosphate. In terms of biological role, involved in mRNA degradation. Catalyzes the phosphorolysis of single-stranded polyribonucleotides processively in the 3'- to 5'-direction. This is Polyribonucleotide nucleotidyltransferase from Prochlorococcus marinus (strain MIT 9215).